The chain runs to 240 residues: Proteasome subunit beta 1 (240 aa).

A propeptide spans 1-46 (MRDMTPGPDLSGPQAADEFQSDPYAPEVGELPEQSAQDSEKVNKTG) (removed in mature form; by autocatalysis). Residues 1 to 48 (MRDMTPGPDLSGPQAADEFQSDPYAPEVGELPEQSAQDSEKVNKTGTT) are disordered. T47 functions as the Nucleophile in the catalytic mechanism.

The protein belongs to the peptidase T1B family. The 20S proteasome core is composed of 14 alpha and 14 beta subunits that assemble into four stacked heptameric rings, resulting in a barrel-shaped structure. The two inner rings, each composed of seven catalytic beta subunits, are sandwiched by two outer rings, each composed of seven alpha subunits. The catalytic chamber with the active sites is on the inside of the barrel. Has a gated structure, the ends of the cylinder being occluded by the N-termini of the alpha-subunits. Is capped at one or both ends by the proteasome regulatory ATPase, PAN.

Its subcellular location is the cytoplasm. It carries out the reaction Cleavage of peptide bonds with very broad specificity.. The formation of the proteasomal ATPase PAN-20S proteasome complex, via the docking of the C-termini of PAN into the intersubunit pockets in the alpha-rings, triggers opening of the gate for substrate entry. Interconversion between the open-gate and close-gate conformations leads to a dynamic regulation of the 20S proteasome proteolysis activity. Its function is as follows. Component of the proteasome core, a large protease complex with broad specificity involved in protein degradation. This Haloarcula marismortui (strain ATCC 43049 / DSM 3752 / JCM 8966 / VKM B-1809) (Halobacterium marismortui) protein is Proteasome subunit beta 1.